A 1284-amino-acid polypeptide reads, in one-letter code: MWSSDRLAGAGSGGAVVTVAFTNARDCFLHLPRRLVAQLHLLQNQAIEVASDHQPTYLSWVEGRHFNDQSENVAEINRQVGQKLGLSSGDQVFLRPCSHVVSCQQVEVEPLSADDWEILELHAISLEQHLLDQIRIVFPKAVVPIWVDQQTYIFIQIVTLMPAAPYGRLETNTKLLIQPKTRQAKESTFPKEGDAHGQVHSYGREQKGLSKELQTRQLHTNSEGITASNGRDPKVPGGPLKPSWWAVLGSMLSFGPDSKQESAWGSLELGAFKNMQSQAAPLEGTFRVCQVQPPSARTTTATSVFHKHCTAHVFPWDQEYFDVEPSFTVTYGKLVKLHSPKQQQDKSKQGVLLPDKEKQLSKSPDHKQISSNRSEEAAEACVLKVVWNGLEELKNATEFTESLELLHRGKVWIPDDLRKRLNIEMHAVVRITPLETTPKIPRSLKLQPRENLPKDVNEETIKTVFSSWVQQSATTMLPLVISKEERIKLEIKDGLREFSLSTVHSQEKEKEEGKTVFVLSSILLQKISVQVLLEPMIKEEQSAEIDFLLPSLTLSSLGGVSALGASAMEHITHSLLGRPLSRQLMALVAGLRNGALLITGGKGSGKSTFAKAICKEAQDTLDARVETVDCKALRGKRLESIQKALEVAFSEAAWRQPSVILLDDLDLIAGLPSVPEQEHSPEAVQSQRLAHALNDMIKEFVSTGSLVALIATSQLQQSLHPSLVSAQGIHTFQCVQHLQPPNPEQRCEILHSVVKNKLGCDISNFPDLDLQCIAKDTEAFVARDFTVLVDRAIHSSLSRQHSSSREDLTLTTSDFQKALRGFLPASLRNVNLHKPRDLGWDKIGGLHEVRQILMDTIQLPAKYPELFANLPIRQRTGILLYGPPGTGKTLLAGVVARESGMNFISIKGPELLSKYIGASEQAVRDVFIRAQAAKPCILFFDEFESIAPRRGHDNTGVTDRVVNQLLTQLDGVEGLQGVYVLAATSRPDLIDPALLRPGRLDKCVYCPPPDQVSRLEILTVLSKSLALADDVDLQHVASVTDSFTGADLKALLYNAQLEALQGRLLPSGLPDGGSSSDSDLSLSSMVFLNHSSGSDDSAGDGECGLEQSLLSLEMSEILPDESKFNMYRLYFGSSYESELGNGTPSDLSSHCLSAPSSVTQDLPAAPGKDPLFTQHPVFRTPSQEGCQDLTQEQRDQLRAEISIIKGRYRSQSGEDESLNQPGPIKTTFAISQAHLMTALAHTRPSISEDEGKEFAELYENFQNPKKRKNQSGTVFRTGQKVTLA.

The disordered stretch occupies residues 339–373; sequence SPKQQQDKSKQGVLLPDKEKQLSKSPDHKQISSNR. Over residues 343–373 the composition is skewed to basic and acidic residues; that stretch reads QQDKSKQGVLLPDKEKQLSKSPDHKQISSNR. ATP-binding positions include 600-607 and 882-889; these read GGKGSGKS and GPPGTGKT. Ser-1182, Ser-1210, and Ser-1212 each carry phosphoserine. The segment at 1261–1284 is disordered; that stretch reads FQNPKKRKNQSGTVFRTGQKVTLA. Residues 1270-1284 are compositionally biased toward polar residues; the sequence is QSGTVFRTGQKVTLA.

Belongs to the AAA ATPase family. In terms of assembly, homooligomer; homooligomerizes in the cytosol, interaction with PEX6 promotes dissociation of the homooligomer. Interacts with PEX6; forming the PEX1-PEX6 AAA ATPase complex, which is composed of a heterohexamer formed by a trimer of PEX1-PEX6 dimers. Interacts indirectly with PEX26, via its interaction with PEX6.

It localises to the cytoplasm. It is found in the cytosol. The protein localises to the peroxisome membrane. It carries out the reaction ATP + H2O = ADP + phosphate + H(+). Its function is as follows. Component of the PEX1-PEX6 AAA ATPase complex, a protein dislocase complex that mediates the ATP-dependent extraction of the PEX5 receptor from peroxisomal membranes, an essential step for PEX5 recycling. Specifically recognizes PEX5 monoubiquitinated at 'Cys-11', and pulls it out of the peroxisome lumen through the PEX2-PEX10-PEX12 retrotranslocation channel. Extraction by the PEX1-PEX6 AAA ATPase complex is accompanied by unfolding of the TPR repeats and release of bound cargo from PEX5. This Mus musculus (Mouse) protein is Peroxisomal ATPase PEX1.